The chain runs to 3387 residues: Genome polyprotein (3387 aa).

Residues 1-100 (MNQRKKVVRP…LNILNGRKRS (100 aa)) lie on the Cytoplasmic side of the membrane. The tract at residues 36–71 (LFSGKGPLRMVLAFITFLRVLSIPPTAGILKRWGQL) is hydrophobic; homodimerization of capsid protein C. Positions 100–113 (STVTLLCLIPTVMA) are cleaved as a propeptide — ER anchor for the capsid protein C, removed in mature form by serine protease NS3. A helical membrane pass occupies residues 101-117 (TVTLLCLIPTVMAFHLS). The Extracellular portion of the chain corresponds to 118-237 (TRDGEPLMIV…GAWKHAQRVE (120 aa)). Asn-182 carries N-linked (GlcNAc...) asparagine; by host glycosylation. A helical membrane pass occupies residues 238–258 (SWILRNPGFALLAGFMAYMIG). The Cytoplasmic portion of the chain corresponds to 259–265 (QTGIQRT). A helical transmembrane segment spans residues 266–279 (VFFVLMMLVAPSYG). The Extracellular segment spans residues 280-725 (MRCIGVGNRD…HQVFGSVYTT (446 aa)). 4 cysteine pairs are disulfide-bonded: Cys-282/Cys-309, Cys-339/Cys-400, Cys-353/Cys-384, and Cys-371/Cys-395. N-linked (GlcNAc...) asparagine; by host glycosylation occurs at Asn-346. Residues 377 to 390 (DRGWGNGCGLFGKG) are fusion peptide. The N-linked (GlcNAc...) asparagine; by host glycan is linked to Asn-432. Disulfide bonds link Cys-464–Cys-564 and Cys-581–Cys-612. A helical membrane pass occupies residues 726 to 746 (MFGGVSWMVRILIGLLVLWIG). Residues 747–751 (TNSRN) are Cytoplasmic-facing. The helical transmembrane segment at 752 to 772 (TPMAMTCIAVGGITLFLGFTV) threads the bilayer. Residues 773-1193 (QADMGCVVSW…IMLGDTMLSR (421 aa)) lie on the Extracellular side of the membrane. Disulfide bonds link Cys-778-Cys-789, Cys-829-Cys-917, Cys-953-Cys-997, Cys-1054-Cys-1103, Cys-1065-Cys-1087, and Cys-1086-Cys-1090. Asn-904 and Asn-981 each carry an N-linked (GlcNAc...) asparagine; by host glycan. A helical transmembrane segment spans residues 1194-1218 (VGGQTHLAIMIVFKMSPGYVLGVFL). Residues 1219–1224 (RKLTSR) are Lumenal-facing. Residues 1225–1243 (ETALMVIGMAMTTVFSIPH) traverse the membrane as a helical segment. The Cytoplasmic segment spans residues 1244-1267 (DLMELIDGISLGLILLKMVTHFDN). The helical transmembrane segment at 1268 to 1288 (TQVGTLALSLTFIRSTMPLTM) threads the bilayer. A topological domain (lumenal) is located at residue Ala-1289. The chain crosses the membrane as a helical span at residues 1290–1308 (WRTIMAVLFAVTLIPLCRT). Residues 1309–1316 (SCLQKQSH) lie on the Lumenal side of the membrane. The chain crosses the membrane as a helical span at residues 1317-1337 (WVEITAIILGAQALPVYLMTL). The Cytoplasmic portion of the chain corresponds to 1338 to 1345 (MKGASKRS). The chain crosses the membrane as a helical span at residues 1346–1366 (WPLNEGIMAVGLVSLLGSALL). At 1367-1369 (KND) the chain is on the lumenal side. A helical transmembrane segment spans residues 1370-1390 (VPLAGPMVAGGLLLAAYVMSG). The Cytoplasmic segment spans residues 1391–1444 (SSADLSLERAANVQWDEMADITGSSPIIEVKQDEDGSFSIRDVEETNMITLLVK). The interacts with and activates NS3 protease stretch occupies residues 1397–1436 (LERAANVQWDEMADITGSSPIIEVKQDEDGSFSIRDVEET). Residues 1445 to 1465 (LALITVSGLYPLAIPITMTLW) constitute an intramembrane region (helical). At 1466–2146 (YMWQVRTQRS…LNELPESLET (681 aa)) the chain is on the cytoplasmic side. The Peptidase S7 domain maps to 1475-1652 (SGALWDVPSP…ERIGEPDYEV (178 aa)). Residues His-1525, Asp-1549, and Ser-1609 each act as charge relay system; for serine protease NS3 activity in the active site. The region spanning 1654–1810 (EDIFRKKRLT…QSNSPIEDIE (157 aa)) is the Helicase ATP-binding domain. An important for RNA-binding region spans residues 1658 to 1661 (RKKR). 1667-1674 (LHPGAGKT) is an ATP binding site. Positions 1758-1761 (DEAH) match the DEAH box motif. A Helicase C-terminal domain is found at 1820–1987 (TGFDWITDYQ…IIPTLFGPER (168 aa)). At Lys-1862 the chain carries N6-acetyllysine; by host. A helical transmembrane segment spans residues 2147 to 2167 (LMLVALLGAMTAGIFLFFMQG). Residues 2168-2169 (KG) lie on the Lumenal side of the membrane. Positions 2170–2190 (IGKLSVGLIAIAVASGLLWVA) form an intramembrane region, helical. Position 2191 (Glu-2191) is a topological domain, lumenal. A helical membrane pass occupies residues 2192–2212 (IQPQWIAASIILEFFLMVLLI). Residues 2213-2225 (PEPEKQRTPQDNQ) lie on the Cytoplasmic side of the membrane. A helical membrane pass occupies residues 2226–2246 (LIYVILAILTIIGLVAANEMG). The Lumenal portion of the chain corresponds to 2247–2270 (LIEKTKADFGFYQVKTETTILDVD). The helical intramembrane region spans 2271–2291 (LRPASAWTLYAVATTILTPML). Over 2292 to 2301 (RHTIENTSAN) the chain is Lumenal. 2 N-linked (GlcNAc...) asparagine; by host glycosylation sites follow: Asn-2297 and Asn-2301. An intramembrane region (helical) is located at residues 2302-2322 (LSLAAIANQAAVLMGLGKGWP). Over 2323–2343 (LHRMDLGVPLLAMGCYSQVNP) the chain is Lumenal. A helical membrane pass occupies residues 2344–2364 (TTLTASLVMLLVHYAIIGPGL). Residues 2365–2409 (QAKATREAQKRTAAGIMKNPTVDGITVIDLEPISYDPKFEKQLGQ) lie on the Cytoplasmic side of the membrane. The helical transmembrane segment at 2410-2430 (VMLLVLCAGQLLLMRTTWAFC) threads the bilayer. At 2431-2455 (EVLTLATGPVLTLWEGNPGRFWNTT) the chain is on the lumenal side. A glycan (N-linked (GlcNAc...) asparagine; by host) is linked at Asn-2453. Residues 2456–2476 (IAVSTANIFRGSYLAGAGLAF) traverse the membrane as a helical segment. Residues 2477–3387 (SLIKNAQTPR…SALSESEGVL (911 aa)) lie on the Cytoplasmic side of the membrane. The mRNA cap 0-1 NS5-type MT domain occupies 2489-2751 (TGTTGETLGE…DVDLGAGTRS (263 aa)). Ser-2543 provides a ligand contact to S-adenosyl-L-methionine. The residue at position 2543 (Ser-2543) is a Phosphoserine. Lys-2548 functions as the For 2'-O-MTase activity in the catalytic mechanism. Residues 2564–2567 (VVDL) carry the SUMO-interacting motif motif. S-adenosyl-L-methionine-binding residues include Gly-2573, Trp-2574, Thr-2591, Lys-2592, Asp-2618, and Val-2619. The active-site For 2'-O-MTase activity is Asp-2633. Ile-2634 contributes to the S-adenosyl-L-methionine binding site. Catalysis depends on for 2'-O-MTase activity residues Lys-2668 and Glu-2704. Tyr-2706 contacts S-adenosyl-L-methionine. Zn(2+) is bound by residues Glu-2925, His-2929, Cys-2934, and Cys-2937. A RdRp catalytic domain is found at 3016–3166 (LMYADDTAGW…PLDERFSTSL (151 aa)). Zn(2+) is bound by residues His-3200, Cys-3216, and Cys-3335.

The protein in the N-terminal section; belongs to the class I-like SAM-binding methyltransferase superfamily. mRNA cap 0-1 NS5-type methyltransferase family. In terms of assembly, homodimer. Interacts (via N-terminus) with host EXOC1 (via C-terminus); this interaction results in EXOC1 degradation through the proteasome degradation pathway. As to quaternary structure, forms heterodimers with envelope protein E in the endoplasmic reticulum and Golgi. Homodimer; in the endoplasmic reticulum and Golgi. Interacts with protein prM. Interacts with non-structural protein 1. In terms of assembly, homodimer; Homohexamer when secreted. Interacts with envelope protein E. As to quaternary structure, interacts (via N-terminus) with serine protease NS3. Forms a heterodimer with serine protease NS3. May form homooligomers. In terms of assembly, forms a heterodimer with NS2B. Interacts with NS4B. Interacts with unphosphorylated RNA-directed RNA polymerase NS5; this interaction stimulates RNA-directed RNA polymerase NS5 guanylyltransferase activity. Interacts with host SHFL. As to quaternary structure, interacts with host MAVS; this interaction inhibits the synthesis of IFN-beta. Interacts with host SHFL. Interacts with host AUP1; the interaction occurs in the presence of Dengue virus NS4B and induces lipophagy which facilitates production of virus progeny particles. Interacts with serine protease NS3. In terms of assembly, homodimer. Interacts with host STAT2; this interaction inhibits the phosphorylation of the latter, and, when all viral proteins are present (polyprotein), targets STAT2 for degradation. Interacts with serine protease NS3. Interacts with host PAF1 complex; the interaction may prevent the recruitment of the PAF1 complex to interferon-responsive genes, and thus reduces the immune response. In terms of processing, specific enzymatic cleavages in vivo yield mature proteins. Cleavages in the lumen of endoplasmic reticulum are performed by host signal peptidase, whereas cleavages in the cytoplasmic side are performed by serine protease NS3. Signal cleavage at the 2K-4B site requires a prior NS3 protease-mediated cleavage at the 4A-2K site. Post-translationally, cleaved in post-Golgi vesicles by a host furin, releasing the mature small envelope protein M, and peptide pr. This cleavage is incomplete as up to 30% of viral particles still carry uncleaved prM. N-glycosylated. In terms of processing, N-glycosylated. The excreted form is glycosylated and this is required for efficient secretion of the protein from infected cells. Post-translationally, acetylated by host KAT5. Acetylation modulates NS3 RNA-binding and unwinding activities and plays an important positive role for viral replication. Sumoylation of RNA-directed RNA polymerase NS5 increases NS5 protein stability allowing proper viral RNA replication. In terms of processing, phosphorylated on serines residues. This phosphorylation may trigger NS5 nuclear localization.

It is found in the virion. The protein resides in the host nucleus. The protein localises to the host cytoplasm. Its subcellular location is the host perinuclear region. It localises to the secreted. It is found in the virion membrane. The protein resides in the host endoplasmic reticulum membrane. The protein localises to the host mitochondrion. It carries out the reaction Selective hydrolysis of -Xaa-Xaa-|-Yaa- bonds in which each of the Xaa can be either Arg or Lys and Yaa can be either Ser or Ala.. The enzyme catalyses RNA(n) + a ribonucleoside 5'-triphosphate = RNA(n+1) + diphosphate. It catalyses the reaction a ribonucleoside 5'-triphosphate + H2O = a ribonucleoside 5'-diphosphate + phosphate + H(+). The catalysed reaction is ATP + H2O = ADP + phosphate + H(+). It carries out the reaction a 5'-end (5'-triphosphoguanosine)-ribonucleoside in mRNA + S-adenosyl-L-methionine = a 5'-end (N(7)-methyl 5'-triphosphoguanosine)-ribonucleoside in mRNA + S-adenosyl-L-homocysteine. The enzyme catalyses a 5'-end (N(7)-methyl 5'-triphosphoguanosine)-ribonucleoside in mRNA + S-adenosyl-L-methionine = a 5'-end (N(7)-methyl 5'-triphosphoguanosine)-(2'-O-methyl-ribonucleoside) in mRNA + S-adenosyl-L-homocysteine + H(+). In terms of biological role, plays a role in virus budding by binding to the cell membrane and gathering the viral RNA into a nucleocapsid that forms the core of a mature virus particle. During virus entry, may induce genome penetration into the host cytoplasm after hemifusion induced by the surface proteins. Can migrate to the cell nucleus where it modulates host functions. Overcomes the anti-viral effects of host EXOC1 by sequestering and degrading the latter through the proteasome degradation pathway. Functionally, inhibits RNA silencing by interfering with host Dicer. Prevents premature fusion activity of envelope proteins in trans-Golgi by binding to envelope protein E at pH6.0. After virion release in extracellular space, gets dissociated from E dimers. Its function is as follows. Acts as a chaperone for envelope protein E during intracellular virion assembly by masking and inactivating envelope protein E fusion peptide. prM is the only viral peptide matured by host furin in the trans-Golgi network probably to avoid catastrophic activation of the viral fusion activity in acidic Golgi compartment prior to virion release. prM-E cleavage is inefficient, and many virions are only partially matured. These uncleaved prM would play a role in immune evasion. In terms of biological role, may play a role in virus budding. Exerts cytotoxic effects by activating a mitochondrial apoptotic pathway through M ectodomain. May display a viroporin activity. Functionally, binds to host cell surface receptor and mediates fusion between viral and cellular membranes. Envelope protein is synthesized in the endoplasmic reticulum in the form of heterodimer with protein prM. They play a role in virion budding in the ER, and the newly formed immature particle is covered with 60 spikes composed of heterodimer between precursor prM and envelope protein E. The virion is transported to the Golgi apparatus where the low pH causes dissociation of PrM-E heterodimers and formation of E homodimers. prM-E cleavage is inefficient, and many virions are only partially matured. These uncleaved prM would play a role in immune evasion. Involved in immune evasion, pathogenesis and viral replication. Once cleaved off the polyprotein, is targeted to three destinations: the viral replication cycle, the plasma membrane and the extracellular compartment. Essential for viral replication. Required for formation of the replication complex and recruitment of other non-structural proteins to the ER-derived membrane structures. Excreted as a hexameric lipoparticle that plays a role against host immune response. Antagonizing the complement function. Binds to the host macrophages and dendritic cells. Inhibits signal transduction originating from Toll-like receptor 3 (TLR3). Its function is as follows. Disrupts the host endothelial glycocalyx layer of host pulmonary microvascular endothelial cells, inducing degradation of sialic acid and shedding of heparan sulfate proteoglycans. NS1 induces expression of sialidases, heparanase, and activates cathepsin L, which activates heparanase via enzymatic cleavage. These effects are probably linked to the endothelial hyperpermeability observed in severe dengue disease. In terms of biological role, component of the viral RNA replication complex that functions in virion assembly and antagonizes the host immune response. Functionally, required cofactor for the serine protease function of NS3. May have membrane-destabilizing activity and form viroporins. Displays three enzymatic activities: serine protease, NTPase and RNA helicase. NS3 serine protease, in association with NS2B, performs its autocleavage and cleaves the polyprotein at dibasic sites in the cytoplasm: C-prM, NS2A-NS2B, NS2B-NS3, NS3-NS4A, NS4A-2K and NS4B-NS5. NS3 RNA helicase binds RNA and unwinds dsRNA in the 3' to 5' direction. Its function is as follows. Regulates the ATPase activity of the NS3 helicase activity. NS4A allows NS3 helicase to conserve energy during unwinding. Plays a role in the inhibition of the host innate immune response. Interacts with host MAVS and thereby prevents the interaction between RIGI and MAVS. In turn, IFN-beta production is impaired. Interacts with host AUP1 which mediates induction of lipophagy in host cells and facilitates production of virus progeny particles. In terms of biological role, functions as a signal peptide for NS4B and is required for the interferon antagonism activity of the latter. Functionally, induces the formation of ER-derived membrane vesicles where the viral replication takes place. Inhibits interferon (IFN)-induced host STAT1 phosphorylation and nuclear translocation, thereby preventing the establishment of cellular antiviral state by blocking the IFN-alpha/beta pathway. Replicates the viral (+) and (-) RNA genome, and performs the capping of genomes in the cytoplasm. NS5 methylates viral RNA cap at guanine N-7 and ribose 2'-O positions. Besides its role in RNA genome replication, also prevents the establishment of cellular antiviral state by blocking the interferon-alpha/beta (IFN-alpha/beta) signaling pathway. Inhibits host TYK2 and STAT2 phosphorylation, thereby preventing activation of JAK-STAT signaling pathway. May reduce immune responses by preventing the recruitment of the host PAF1 complex to interferon-responsive genes. The polypeptide is Genome polyprotein (Aedes aegypti (Yellowfever mosquito)).